The following is a 282-amino-acid chain: 2-dehydro-3-deoxyphosphooctonate aldolase (282 aa).

It belongs to the KdsA family.

The protein resides in the cytoplasm. The enzyme catalyses D-arabinose 5-phosphate + phosphoenolpyruvate + H2O = 3-deoxy-alpha-D-manno-2-octulosonate-8-phosphate + phosphate. Its pathway is carbohydrate biosynthesis; 3-deoxy-D-manno-octulosonate biosynthesis; 3-deoxy-D-manno-octulosonate from D-ribulose 5-phosphate: step 2/3. It functions in the pathway bacterial outer membrane biogenesis; lipopolysaccharide biosynthesis. This Granulibacter bethesdensis (strain ATCC BAA-1260 / CGDNIH1) protein is 2-dehydro-3-deoxyphosphooctonate aldolase.